Here is a 126-residue protein sequence, read N- to C-terminus: Small ribosomal subunit protein uS13 (126 aa).

Positions Gly95 to Lys126 are disordered.

Belongs to the universal ribosomal protein uS13 family. As to quaternary structure, part of the 30S ribosomal subunit. Forms a loose heterodimer with protein S19. Forms two bridges to the 50S subunit in the 70S ribosome.

Located at the top of the head of the 30S subunit, it contacts several helices of the 16S rRNA. In the 70S ribosome it contacts the 23S rRNA (bridge B1a) and protein L5 of the 50S subunit (bridge B1b), connecting the 2 subunits; these bridges are implicated in subunit movement. Contacts the tRNAs in the A and P-sites. The polypeptide is Small ribosomal subunit protein uS13 (rpsM) (Thermus thermophilus (strain ATCC BAA-163 / DSM 7039 / HB27)).